We begin with the raw amino-acid sequence, 150 residues long: Large ribosomal subunit protein uL13 (150 aa).

Positions 129–150 (TEHPHAAQKPQPLQLNPSASAQ) are disordered. A compositionally biased stretch (polar residues) spans 139 to 150 (QPLQLNPSASAQ).

Belongs to the universal ribosomal protein uL13 family. As to quaternary structure, part of the 50S ribosomal subunit.

This protein is one of the early assembly proteins of the 50S ribosomal subunit, although it is not seen to bind rRNA by itself. It is important during the early stages of 50S assembly. This chain is Large ribosomal subunit protein uL13, found in Synechococcus sp. (strain CC9605).